A 467-amino-acid chain; its full sequence is Glycine--tRNA ligase (467 aa).

Substrate contacts are provided by arginine 100 and glutamate 175. ATP contacts are provided by residues arginine 207–glutamate 209, phenylalanine 217–phenylalanine 222, glutamate 291–leucine 292, and glycine 335–arginine 338. Phenylalanine 222 to glutamate 226 contacts substrate. Glutamate 331 to glycine 335 serves as a coordination point for substrate.

It belongs to the class-II aminoacyl-tRNA synthetase family. As to quaternary structure, homodimer.

Its subcellular location is the cytoplasm. The enzyme catalyses tRNA(Gly) + glycine + ATP = glycyl-tRNA(Gly) + AMP + diphosphate. Its function is as follows. Catalyzes the attachment of glycine to tRNA(Gly). The sequence is that of Glycine--tRNA ligase from Clostridium perfringens (strain 13 / Type A).